Here is a 311-residue protein sequence, read N- to C-terminus: Ribosomal RNA small subunit methyltransferase H (311 aa).

S-adenosyl-L-methionine is bound by residues 32–34, Asp52, Phe79, Asp100, and Gln107; that span reads AGH.

It belongs to the methyltransferase superfamily. RsmH family.

It is found in the cytoplasm. It catalyses the reaction cytidine(1402) in 16S rRNA + S-adenosyl-L-methionine = N(4)-methylcytidine(1402) in 16S rRNA + S-adenosyl-L-homocysteine + H(+). Its function is as follows. Specifically methylates the N4 position of cytidine in position 1402 (C1402) of 16S rRNA. This Staphylococcus aureus (strain bovine RF122 / ET3-1) protein is Ribosomal RNA small subunit methyltransferase H.